The sequence spans 246 residues: Triosephosphate isomerase (246 aa).

9–11 is a substrate binding site; sequence NWK. Histidine 99 functions as the Electrophile in the catalytic mechanism. Glutamate 168 functions as the Proton acceptor in the catalytic mechanism. Substrate-binding positions include glycine 174, serine 207, and 228 to 229; that span reads GG.

The protein belongs to the triosephosphate isomerase family. As to quaternary structure, homodimer.

It is found in the cytoplasm. The enzyme catalyses D-glyceraldehyde 3-phosphate = dihydroxyacetone phosphate. It functions in the pathway carbohydrate biosynthesis; gluconeogenesis. It participates in carbohydrate degradation; glycolysis; D-glyceraldehyde 3-phosphate from glycerone phosphate: step 1/1. Involved in the gluconeogenesis. Catalyzes stereospecifically the conversion of dihydroxyacetone phosphate (DHAP) to D-glyceraldehyde-3-phosphate (G3P). This chain is Triosephosphate isomerase, found in Prochlorococcus marinus (strain NATL2A).